The chain runs to 50 residues: Omwaprin-a (50 aa).

Residues 3–47 form the WAP domain; that stretch reads RPKKPGLCPPRPQKPCVKECKNDDSCPGQQKCCNYGCKDECRDPI. Cystine bridges form between cysteine 10–cysteine 35, cysteine 18–cysteine 39, cysteine 22–cysteine 34, and cysteine 28–cysteine 43.

This sequence belongs to the venom waprin family. Expressed by the venom gland.

The protein resides in the secreted. Damages membranes of susceptible bacteria. Has antibacterial activity against the Gram-positive bacteria B.megaterium and S.warneri. After a 45-minute treatment with this protein, B.megaterium have no visible pili and are smooth. Has no antibacterial activity against the Gram-positive bacteria B.thuringiensis, S.aureus, S.clavuligerus and B.anthracis, or the Gram-negative bacteria E.coli and A.tumefaciens. Has no hemolytic activity. Does not inhibit the proteinases elastase and cathepsin G. Is not toxic to mice. This is Omwaprin-a from Oxyuranus microlepidotus (Inland taipan).